The following is a 603-amino-acid chain: Palladin (603 aa).

The interval 63 to 67 is interaction with VASP; it reads FPPPP. Serine 133 carries the phosphoserine modification. A disordered region spans residues 134–156; sequence PPTPAALLSPTKEPPPLLAKPKL. Threonine 136 is subject to Phosphothreonine. A phosphoserine mark is found at serine 142, serine 170, serine 256, and serine 261. In terms of domain architecture, Ig-like C2-type 1 spans 278–362; it reads PFFEMKLKHY…MAANTQGRVS (85 aa). The tract at residues 373–402 is disordered; it reads NQRGRSPRSPPGHPHARRPRSRSRDSGDEN. Phosphoserine occurs at positions 378, 381, and 393. A Phosphoserine; by PKB/AKT1 modification is found at serine 395. Phosphoserine is present on serine 398. Ig-like C2-type domains follow at residues 412-503 and 511-601; these read PHFL…LVVA and PVFI…ARLD. Interaction with EZR regions lie at residues 414 to 503 and 513 to 603; these read FLQA…LVVA and FIEK…LDVY. Cysteine 433 and cysteine 485 are disulfide-bonded.

It belongs to the myotilin/palladin family. As to quaternary structure, interacts with EPS8. Interacts with LASP1. Interacts with VASP. Interacts with ACTN. Interacts with SORBS2. Interacts with PFN1. Interacts with LPP. Interacts with SPIN90. Interacts with SRC. Interacts with EZR. Interacts with RAI14. Phosphorylated predominantly on serines and, to a lesser extent, on tyrosines. Phosphorylation at Ser-395 by PKB/AKT1 modulates cytoskeletal organization and cell motility. In adult central nervous system is detected in the brain and spinal cord, specially in the olfactory bulb, cerebral and cerebellar cortices, hippocampus, amygdala, superior colluculus, and superficial laminae of the spinal dorsal horn.

It localises to the cytoplasm. It is found in the cytoskeleton. The protein resides in the cell junction. Its subcellular location is the focal adhesion. The protein localises to the myofibril. It localises to the sarcomere. It is found in the z line. The protein resides in the cell projection. Its subcellular location is the ruffle. The protein localises to the podosome. It localises to the lamellipodium. It is found in the axon. The protein resides in the growth cone. Its function is as follows. Cytoskeletal protein required for organization of normal actin cytoskeleton. Roles in establishing cell morphology, motility, cell adhesion and cell-extracellular matrix interactions in a variety of cell types. May function as a scaffolding molecule with the potential to influence both actin polymerization and the assembly of existing actin filaments into higher-order arrays. Binds to proteins that bind to either monomeric or filamentous actin. Localizes at sites where active actin remodeling takes place, such as lamellipodia and membrane ruffles. Different isoforms may have functional differences. Plays a role in neurite outgrowth and in the establishment of polarity during neuronal morphogenesis. Participates in the acquisition of the reactive astrocyte morphology. The protein is Palladin (Palld) of Rattus norvegicus (Rat).